The sequence spans 258 residues: Glutamate racemase (258 aa).

Residues 11–12 (DS) and 43–44 (YG) contribute to the substrate site. C74 acts as the Proton donor/acceptor in catalysis. 75–76 (NT) is a binding site for substrate. C182 functions as the Proton donor/acceptor in the catalytic mechanism. Residue 183–184 (TH) participates in substrate binding.

Belongs to the aspartate/glutamate racemases family.

The enzyme catalyses L-glutamate = D-glutamate. The protein operates within cell wall biogenesis; peptidoglycan biosynthesis. In terms of biological role, provides the (R)-glutamate required for cell wall biosynthesis. This chain is Glutamate racemase, found in Leptospira borgpetersenii serovar Hardjo-bovis (strain JB197).